Consider the following 396-residue polypeptide: Maltose/maltodextrin-binding periplasmic protein (396 aa).

Positions 1 to 26 (MKIKTGARILALSALTTMMFSASALA) are cleaved as a signal peptide.

It belongs to the bacterial solute-binding protein 1 family. As to quaternary structure, the complex is composed of two ATP-binding proteins (MalK), two transmembrane proteins (MalG and MalF) and a solute-binding protein (MalE).

It is found in the periplasm. Its function is as follows. Part of the ABC transporter complex MalEFGK involved in maltose/maltodextrin import. Binds maltose and higher maltodextrins. The protein is Maltose/maltodextrin-binding periplasmic protein (malE) of Escherichia coli O157:H7.